The following is a 145-amino-acid chain: 3-hydroxyacyl-[acyl-carrier-protein] dehydratase FabZ (145 aa).

His-48 is a catalytic residue.

Belongs to the thioester dehydratase family. FabZ subfamily.

It is found in the cytoplasm. It catalyses the reaction a (3R)-hydroxyacyl-[ACP] = a (2E)-enoyl-[ACP] + H2O. Involved in unsaturated fatty acids biosynthesis. Catalyzes the dehydration of short chain beta-hydroxyacyl-ACPs and long chain saturated and unsaturated beta-hydroxyacyl-ACPs. This Geobacillus sp. (strain WCH70) protein is 3-hydroxyacyl-[acyl-carrier-protein] dehydratase FabZ.